The primary structure comprises 166 residues: Small ribosomal subunit protein eS10 (166 aa).

The interval 95–166 is disordered; it reads RRQTRPETAR…FGRGRGQQPQ (72 aa). The segment covering 98–129 has biased composition (basic and acidic residues); it reads TRPETARPRPKGLEGERPARLARGEGDRDAYR. Residues 143 to 154 show a composition bias toward low complexity; sequence AGAGAATEFQFR. Positions 155–166 are enriched in gly residues; the sequence is GGFGRGRGQQPQ.

Belongs to the eukaryotic ribosomal protein eS10 family. Component of the small ribosomal subunit.

It localises to the cytoplasm. Its subcellular location is the nucleus. The protein resides in the nucleolus. Functionally, component of the 40S ribosomal subunit. The ribosome is a large ribonucleoprotein complex responsible for the synthesis of proteins in the cell. The protein is Small ribosomal subunit protein eS10 (rps10) of Ictalurus punctatus (Channel catfish).